The chain runs to 729 residues: Solute carrier family 15 member 2 (729 aa).

Residues 1-34 are disordered; that stretch reads MNPFQKNESKETLFSPVSIEEVPPRPPSPPKKPS. Residues 1–57 are Cytoplasmic-facing; that stretch reads MNPFQKNESKETLFSPVSIEEVPPRPPSPPKKPSPTICGSNYPLSIAFIVVNEFCER. Ser-9 carries the phosphoserine modification. Thr-12 is modified (phosphothreonine). A compositionally biased stretch (pro residues) spans 24–33; it reads PRPPSPPKKP. Residue Ser-28 is modified to Phosphoserine. A helical membrane pass occupies residues 58–78; sequence FSYYGMKAVLILYFLYFLHWN. Residues 79–83 lie on the Extracellular side of the membrane; the sequence is EDTST. The chain crosses the membrane as a helical span at residues 84 to 104; sequence SIYHAFSSLCYFTPILGAAIA. The Cytoplasmic segment spans residues 105–113; the sequence is DSWLGKFKT. The chain crosses the membrane as a helical span at residues 114 to 134; the sequence is IIYLSLVYVLGHVIKSLGALP. Residues 135-139 are Extracellular-facing; it reads ILGGQ. A helical transmembrane segment spans residues 140 to 160; it reads VVHTVLSLIGLSLIALGTGGI. Over 161 to 183 the chain is Cytoplasmic; sequence KPCVAAFGGDQFEEKHAEERTRY. A helical transmembrane segment spans residues 184–204; sequence FSVFYLSINAGSLISTFITPM. The Extracellular segment spans residues 205 to 217; sequence LRGDVQCFGEDCY. Residues 218-238 form a helical membrane-spanning segment; it reads ALAFGVPGLLMVIALVVFAMG. Residues 239-295 lie on the Cytoplasmic side of the membrane; that stretch reads SKIYNKPPPEGNIVAQVFKCIWFAISNRFKNRSGDIPKRQHWLDWAAEKYPKQLIMD. The chain crosses the membrane as a helical span at residues 296-316; it reads VKALTRVLFLYIPLPMFWALL. Topologically, residues 317–343 are extracellular; it reads DQQGSRWTLQAIRMNRNLGFFVLQPDQ. A helical transmembrane segment spans residues 344–364; it reads MQVLNPLLVLIFIPLFDFVIY. The Cytoplasmic portion of the chain corresponds to 365 to 380; the sequence is RLVSKCGINFSSLRKM. The helical transmembrane segment at 381-401 threads the bilayer; the sequence is AVGMILACLAFAVAAAVEIKI. Residues 402–611 lie on the Extracellular side of the membrane; sequence NEMAPAQPGP…PANKMSIAWQ (210 aa). An extracellular domain (ECD) region spans residues 402–611; that stretch reads NEMAPAQPGP…PANKMSIAWQ (210 aa). 5 N-linked (GlcNAc...) asparagine glycosylation sites follow: Asn-435, Asn-472, Asn-528, Asn-567, and Asn-587. A helical membrane pass occupies residues 612–632; the sequence is LPQYALVTAGEVMFSVTGLEF. Residues 633-643 are Cytoplasmic-facing; it reads SYSQAPSSMKS. A helical membrane pass occupies residues 644–664; it reads VLQAAWLLTIAVGNIIVLVVA. Topologically, residues 665 to 674 are extracellular; it reads QFSGLVQWAE. Residues 675-695 traverse the membrane as a helical segment; sequence FILFSCLLLVICLIFSIMGYY. Residues 696–729 lie on the Cytoplasmic side of the membrane; it reads YVPVKTEDMRGPADKHIPHIQGNMIKLETKKTKL.

Belongs to the major facilitator superfamily. Proton-dependent oligopeptide transporter (POT/PTR) (TC 2.A.17) family. Interacts (via extracellular domain region) with trypsin. Expressed in kidney. Not detected in intestine. Highly expressed in macrophages.

It is found in the apical cell membrane. The protein resides in the cytoplasmic vesicle. It localises to the phagosome membrane. Its subcellular location is the cell membrane. The catalysed reaction is a dipeptide(out) + 2 H(+)(out) = a dipeptide(in) + 2 H(+)(in). It catalyses the reaction N-acetyl-D-muramoyl-L-alanyl-D-isoglutamine(out) + 3 H(+)(out) = N-acetyl-D-muramoyl-L-alanyl-D-isoglutamine(in) + 3 H(+)(in). It carries out the reaction glycyl-L-leucine(out) + 2 H(+)(out) = glycyl-L-leucine(in) + 2 H(+)(in). The enzyme catalyses glycyl-L-lysine(out) + 2 H(+)(out) = glycyl-L-lysine(in) + 2 H(+)(in). The catalysed reaction is glycyl-L-glutamate(out) + 3 H(+)(out) = glycyl-L-glutamate(in) + 3 H(+)(in). It catalyses the reaction L-alanyl-L-alanine(out) + 2 H(+)(out) = L-alanyl-L-alanine(in) + 2 H(+)(in). It carries out the reaction an L-amino acid tripeptide(out) + 2 H(+)(out) = an L-amino acid tripeptide(in) + 2 H(+)(in). The enzyme catalyses carnosine(out) + 2 H(+)(out) = carnosine(in) + 2 H(+)(in). Its function is as follows. Proton-coupled amino-acid transporter that transports oligopeptides of 2 to 4 amino acids with a preference for dipeptides. Transports neutral and anionic dipeptides with a proton to peptide stoichiometry of 2:1 or 3:1. In kidney, involved in the absorption of circulating di- and tripeptides from the glomerular filtrate. Can also transport beta-lactam antibiotics, such as the aminocephalosporin cefadroxil, and other antiviral and anticancer drugs. Transports the dipeptide-like aminopeptidase inhibitor bestatin. Also able to transport carnosine. Involved in innate immunity by promoting the detection of microbial pathogens by NOD-like receptors (NLRs). Mediates transport of bacterial peptidoglycans across the plasma membrane or, in macrophages, the phagosome membrane: catalyzes the transport of certain bacterial peptidoglycans, such as muramyl dipeptide (MDP), the NOD2 ligand. The chain is Solute carrier family 15 member 2 from Homo sapiens (Human).